Here is a 299-residue protein sequence, read N- to C-terminus: Biotin transporter (299 aa).

10 helical membrane passes run 2-22, 26-46, 56-76, 81-101, 110-130, 137-157, 172-192, 202-222, 233-253, and 256-276; these read ALLIITTILWAFSFSFYGEYL, VDSYFAVLVRVGLAALVFLPF, TVGLYMLVGAMQLGVMYMLSF, YLTVSELLLFTVLTPLYITLI, LRWGYAFSALLAVIGAGIIRY, FWTGLLLVQLSNITFAIGMVG, AFAWFYLGAFLVAVIAWFLLG, LQWGILVFLGVVASGIGYFMW, TLGIMNNMHVPAGLLVNLAIW, and QPHWPTFITGALVILASLWVH. EamA domains are found at residues 3–128 and 139–274; these read LLII…AGII and TGLL…ASLW.

The protein belongs to the drug/metabolite transporter (DMT) superfamily. 10 TMS drug/metabolite exporter (DME) (TC 2.A.7.3) family.

The protein resides in the cell inner membrane. The enzyme catalyses biotin(in) = biotin(out). In terms of biological role, uptake of biotin. The sequence is that of Biotin transporter from Escherichia coli O157:H7.